Consider the following 254-residue polypeptide: Phosphonates import ATP-binding protein PhnC (254 aa).

One can recognise an ABC transporter domain in the interval 2–246; the sequence is IQLKNVSKIY…VFDDIYNGGN (245 aa). 35-42 is an ATP binding site; that stretch reads GLSGAGKS.

It belongs to the ABC transporter superfamily. Phosphonates importer (TC 3.A.1.9.1) family. The complex is composed of two ATP-binding proteins (PhnC), two transmembrane proteins (PhnE) and a solute-binding protein (PhnD).

Its subcellular location is the cell membrane. The catalysed reaction is phosphonate(out) + ATP + H2O = phosphonate(in) + ADP + phosphate + H(+). Functionally, part of the ABC transporter complex PhnCDE involved in phosphonates import. Responsible for energy coupling to the transport system. The sequence is that of Phosphonates import ATP-binding protein PhnC from Lactobacillus johnsonii (strain CNCM I-12250 / La1 / NCC 533).